Reading from the N-terminus, the 522-residue chain is Probable poly(ADP-ribose) glycohydrolase 2 (522 aa).

This sequence belongs to the poly(ADP-ribose) glycohydrolase family.

The enzyme catalyses [(1''-&gt;2')-ADP-alpha-D-ribose](n) + H2O = [(1''-&gt;2')-ADP-alpha-D-ribose](n-1) + ADP-D-ribose. Functionally, poly(ADP-ribose) synthesized after DNA damage is only present transiently and is rapidly degraded by poly(ADP-ribose) glycohydrolase. This is Probable poly(ADP-ribose) glycohydrolase 2 (PARG2) from Arabidopsis thaliana (Mouse-ear cress).